We begin with the raw amino-acid sequence, 503 residues long: Transmembrane protein 184C (503 aa).

The next 7 helical transmembrane spans lie at 17-37 (LLIL…IWEF), 48-68 (VWFI…CGIL), 83-103 (IIRI…ALKY), 115-135 (ECYE…YLTI), 212-232 (YLVI…LLFY), 254-274 (VVFV…VGVI), and 287-307 (AVAT…AAIA). Disordered regions lie at residues 358–391 (PKKK…SPVG) and 479–503 (SPKP…STDS). A compositionally biased stretch (low complexity) spans 373 to 388 (SSLLSASSQDSSKPSS). Residues 494 to 503 (PEGSDSSTDS) show a composition bias toward polar residues.

Belongs to the TMEM184 family.

It is found in the membrane. In terms of biological role, possible tumor suppressor which may play a role in cell growth. The protein is Transmembrane protein 184C (Tmem184c) of Rattus norvegicus (Rat).